A 291-amino-acid chain; its full sequence is Phosphate-binding protein PstS 2 (291 aa).

Positions 1–21 (MKFKKMLTLAAIGLSGFGLVA) are cleaved as a signal peptide. Residue C22 is the site of N-palmitoyl cysteine attachment. C22 carries S-diacylglycerol cysteine lipidation.

Belongs to the PstS family. The complex is composed of two ATP-binding proteins (PstB), two transmembrane proteins (PstC and PstA) and a solute-binding protein (PstS).

The protein resides in the cell membrane. Functionally, part of the ABC transporter complex PstSACB involved in phosphate import. In Streptococcus pneumoniae serotype 4 (strain ATCC BAA-334 / TIGR4), this protein is Phosphate-binding protein PstS 2 (pstS2).